Reading from the N-terminus, the 429-residue chain is Growth/differentiation factor 2 (429 aa).

The signal sequence occupies residues 1 to 22 (MCPGALWVALPLLSLLAGSLQG). Residues 23-319 (KPLQSWGRGS…AGSTLARRKR (297 aa)) constitute a propeptide that is removed on maturation. 2 N-linked (GlcNAc...) asparagine glycosylation sites follow: N71 and N136. Over residues 283–301 (VLKKLSKDGSTEAGESSHE) the composition is skewed to basic and acidic residues. The disordered stretch occupies residues 283–308 (VLKKLSKDGSTEAGESSHEEDTDGHV). 3 disulfides stabilise this stretch: C327–C393, C356–C426, and C360–C428. The interaction with ENG stretch occupies residues 402-416 (SVLYKDDMGVPTLKY).

This sequence belongs to the TGF-beta family. In terms of assembly, homodimer; disulfide-linked. Detected in extracellular fluid as mature homodimer, and in complex with its propeptide. Interacts with ACVRL1, BMPR2 and ACVR2B with high affinity (in vitro). Identified in a complex with ACVRL1 and ACVR2B. Has ten times lower affinity for ACVR2A (in vitro). Interacts with ENG, forming a heterotetramer with a 2:2 stoichiometry. Can form a heteromeric complex with ENG and ACVRL1. Interacts with type I receptor ACVR1. A reversible disulfide bond can be formed between the two subunits in the homodimer; this has no effect on GDF2 activity. Detected in blood plasma (at protein level).

It localises to the secreted. Potent circulating inhibitor of angiogenesis. Signals through the type I activin receptor ACVRL1 but not other Alks. Signaling through SMAD1 in endothelial cells requires TGF-beta coreceptor endoglin/ENG. This is Growth/differentiation factor 2 (GDF2) from Homo sapiens (Human).